Here is a 403-residue protein sequence, read N- to C-terminus: MSVAFASARPRGKGEVTQQTIQKMLDENHHLIQCIMDYQSKGKTAECTQYQQILHRNLVYLATIADSNQNMQSLLPAPPTQNMNLGPGGMSQTGPSQTLHSQGNLSEALGSSLPPSSIMQGQISNGPNHVSMQQSGQTTLPTTTMSMAVSTHGSAPGYSHTVPSSQNVPMQNQGSIGNYVSRANMNMPSNPVTMMHQQATSSHYTSAQAGSQHYQGQPSIAMMNQSSQGSSMMGQRPLGPYRPSQQGSSQQYLGQEEYYSEQYGHSQGSSEAMTPQYYTDAGHGDYSYQQSSYGEQSYERTFEDSSQHYYEGGNAQYSQQQTGYQQGSGQQQAYSQQQYSNQQNYPGQQQGYVPAQGASSQYSGYQQGQGQQYASYRTSQTTSTAQQQRPYGYEQGQYGNYQQ.

Positions methionine 1–alanine 148 are N-terminal auto-inhibitory domain. The short motif at tyrosine 50 to isoleucine 53 is the SH2-binding element. 4 disordered regions span residues glutamine 72 to serine 111, histidine 152 to glutamine 171, asparagine 224 to glutamate 303, and serine 318 to glutamine 403. Composition is skewed to polar residues over residues glutamine 92–leucine 105 and threonine 161–glutamine 171. The segment at valine 149–leucine 238 is methionine-rich intra-molecular domain. Low complexity predominate over residues asparagine 224–glutamine 235. The interval tyrosine 252–tyrosine 324 is MFD domain. Residues tyrosine 263 to tyrosine 277 are compositionally biased toward polar residues. The span at tyrosine 286–glutamine 296 shows a compositional bias: low complexity. Positions asparagine 341–glutamine 403 are necessary for nuclear localization. The short motif at serine 360–serine 363 is the SH2-binding element. The short motif at threonine 378 to glutamine 386 is the SH3-binding element. The SH2-binding motif lies at tyrosine 398–tyrosine 401.

Belongs to the SS18 family. As to quaternary structure, homodimer.

It is found in the nucleus. Its function is as follows. Transcriptional activator which may be required for calcium-dependent dendritic growth and branching in cortical neurons. The protein is Calcium-responsive transactivator (ss18l1) of Xenopus laevis (African clawed frog).